A 363-amino-acid chain; its full sequence is tRNA N6-adenosine threonylcarbamoyltransferase (363 aa).

Fe cation-binding residues include H121 and H125. Residues 143–147 (LASGG), D176, G189, and N287 each bind substrate. D315 provides a ligand contact to Fe cation.

The protein belongs to the KAE1 / TsaD family. The cofactor is Fe(2+).

The protein localises to the cytoplasm. It carries out the reaction L-threonylcarbamoyladenylate + adenosine(37) in tRNA = N(6)-L-threonylcarbamoyladenosine(37) in tRNA + AMP + H(+). Functionally, required for the formation of a threonylcarbamoyl group on adenosine at position 37 (t(6)A37) in tRNAs that read codons beginning with adenine. Is involved in the transfer of the threonylcarbamoyl moiety of threonylcarbamoyl-AMP (TC-AMP) to the N6 group of A37, together with TsaE and TsaB. TsaD likely plays a direct catalytic role in this reaction. The sequence is that of tRNA N6-adenosine threonylcarbamoyltransferase from Rhodopseudomonas palustris (strain ATCC BAA-98 / CGA009).